Reading from the N-terminus, the 136-residue chain is Ribosome-binding factor A (136 aa).

Residues aspartate 114–arginine 136 form a disordered region. Residues aspartate 124–arginine 136 are compositionally biased toward acidic residues.

It belongs to the RbfA family. As to quaternary structure, monomer. Binds 30S ribosomal subunits, but not 50S ribosomal subunits or 70S ribosomes.

It localises to the cytoplasm. In terms of biological role, one of several proteins that assist in the late maturation steps of the functional core of the 30S ribosomal subunit. Associates with free 30S ribosomal subunits (but not with 30S subunits that are part of 70S ribosomes or polysomes). Required for efficient processing of 16S rRNA. May interact with the 5'-terminal helix region of 16S rRNA. The sequence is that of Ribosome-binding factor A from Bordetella petrii (strain ATCC BAA-461 / DSM 12804 / CCUG 43448).